Consider the following 115-residue polypeptide: Large ribosomal subunit protein uL24 (115 aa).

This sequence belongs to the universal ribosomal protein uL24 family. As to quaternary structure, part of the 50S ribosomal subunit.

Its function is as follows. One of two assembly initiator proteins, it binds directly to the 5'-end of the 23S rRNA, where it nucleates assembly of the 50S subunit. In terms of biological role, one of the proteins that surrounds the polypeptide exit tunnel on the outside of the subunit. The chain is Large ribosomal subunit protein uL24 from Beutenbergia cavernae (strain ATCC BAA-8 / DSM 12333 / CCUG 43141 / JCM 11478 / NBRC 16432 / NCIMB 13614 / HKI 0122).